Reading from the N-terminus, the 294-residue chain is 4-hydroxy-tetrahydrodipicolinate synthase (294 aa).

Thr-45 serves as a coordination point for pyruvate. Tyr-133 (proton donor/acceptor) is an active-site residue. Catalysis depends on Lys-161, which acts as the Schiff-base intermediate with substrate. Ile-203 contacts pyruvate.

This sequence belongs to the DapA family. In terms of assembly, homotetramer; dimer of dimers.

The protein resides in the cytoplasm. It carries out the reaction L-aspartate 4-semialdehyde + pyruvate = (2S,4S)-4-hydroxy-2,3,4,5-tetrahydrodipicolinate + H2O + H(+). It participates in amino-acid biosynthesis; L-lysine biosynthesis via DAP pathway; (S)-tetrahydrodipicolinate from L-aspartate: step 3/4. Its function is as follows. Catalyzes the condensation of (S)-aspartate-beta-semialdehyde [(S)-ASA] and pyruvate to 4-hydroxy-tetrahydrodipicolinate (HTPA). In Thioalkalivibrio sulfidiphilus (strain HL-EbGR7), this protein is 4-hydroxy-tetrahydrodipicolinate synthase.